We begin with the raw amino-acid sequence, 357 residues long: Probable leucine aminopeptidase TRV_02148.1 (357 aa).

The signal sequence occupies residues Met-1–Ala-15. Residue Asn-76 is glycosylated (N-linked (GlcNAc...) asparagine). Residues His-167 and Asp-185 each coordinate Zn(2+). The disordered stretch occupies residues Asp-169–Ser-188. An N-linked (GlcNAc...) asparagine glycan is attached at Asn-186. Residues Glu-224 and Asp-251 each coordinate Zn(2+). The N-linked (GlcNAc...) asparagine glycan is linked to Asn-269. Residues Cys-291 and Cys-295 are joined by a disulfide bond. His-324 serves as a coordination point for Zn(2+).

This sequence belongs to the peptidase M28 family. M28E subfamily. In terms of assembly, monomer. It depends on Zn(2+) as a cofactor.

It localises to the secreted. Its function is as follows. Probable extracellular aminopeptidase which contributes to pathogenicity. The polypeptide is Probable leucine aminopeptidase TRV_02148.1 (Trichophyton verrucosum (strain HKI 0517)).